Here is a 188-residue protein sequence, read N- to C-terminus: Elongation factor P (188 aa).

It belongs to the elongation factor P family.

It localises to the cytoplasm. Its pathway is protein biosynthesis; polypeptide chain elongation. Functionally, involved in peptide bond synthesis. Stimulates efficient translation and peptide-bond synthesis on native or reconstituted 70S ribosomes in vitro. Probably functions indirectly by altering the affinity of the ribosome for aminoacyl-tRNA, thus increasing their reactivity as acceptors for peptidyl transferase. The sequence is that of Elongation factor P from Parabacteroides distasonis (strain ATCC 8503 / DSM 20701 / CIP 104284 / JCM 5825 / NCTC 11152).